The chain runs to 206 residues: Ribosomal RNA large subunit methyltransferase E (206 aa).

Positions 60, 62, 80, 96, and 121 each coordinate S-adenosyl-L-methionine. Residue lysine 161 is the Proton acceptor of the active site.

The protein belongs to the class I-like SAM-binding methyltransferase superfamily. RNA methyltransferase RlmE family.

The protein localises to the cytoplasm. The enzyme catalyses uridine(2552) in 23S rRNA + S-adenosyl-L-methionine = 2'-O-methyluridine(2552) in 23S rRNA + S-adenosyl-L-homocysteine + H(+). Functionally, specifically methylates the uridine in position 2552 of 23S rRNA at the 2'-O position of the ribose in the fully assembled 50S ribosomal subunit. In Francisella philomiragia subsp. philomiragia (strain ATCC 25017 / CCUG 19701 / FSC 153 / O#319-036), this protein is Ribosomal RNA large subunit methyltransferase E.